The chain runs to 586 residues: BTB/POZ domain and ankyrin repeat-containing protein NPR1 (586 aa).

The BTB domain occupies 63–139; the sequence is SDADIVVEGI…VYTGKLKPSP (77 aa). The C2HC NPR-type zinc finger occupies 142–156; it reads VSTCVHNVCAHDACR. The Zn(2+) site is built by Cys145, Cys150, His152, and Cys155. 3 ANK repeats span residues 266-296, 298-325, and 329-358; these read KRIR…TLDE, NALH…DVNL, and RGYT…RASE. The salicylic acid-binding core (SBC) stretch occupies residues 388–522; sequence EANKDRICID…LDKFIDDDLP (135 aa). Arg433 contributes to the salicylate binding site. Residues 561-586 are disordered; sequence NLSGLSSSSSTTSPEKIGANQKVREP. The segment covering 562-573 has biased composition (low complexity); that stretch reads LSGLSSSSSTTS.

It belongs to the plant 'ANKYRIN-BTB/POZ' family. 'NPR1-like' subfamily. In terms of tissue distribution, highly expressed in leaves. Expressed at low levels in roots and stems.

The protein resides in the cytoplasm. It localises to the nucleus. The protein localises to the nuclear body. The protein operates within protein modification; protein ubiquitination. Salicylic acid (SA)-binding substrate-specific adapter of an E3 ubiquitin-protein ligase complex (CUL3-RBX1-BTB) which mediates the ubiquitination and subsequent proteasomal degradation of target proteins. Transcription cofactor that represses gene expression in the absence of salicylic acid (SA), when attached to negative cis-elements (W-box) with WRKY transcription factors, but stimulates gene expression upon activation by SA, when sumoylated and attached to positive cis-elements (as-1) with TGA transcription factors, thus confering immunity through a series of gene regulations ending in a significant increase in antimicrobial and defense genes expression. Probable component of the salicylic acid (SA) defense signaling pathway and pathogen-induced systemic acquired resistance (SAR). May be involved in disease resistance against fungal pathogens. May be involved in tolerance to salt and osmotic stresses. The polypeptide is BTB/POZ domain and ankyrin repeat-containing protein NPR1 (Malus hupehensis (Chinese crab apple)).